The following is a 410-amino-acid chain: Gamma-glutamyl phosphate reductase (410 aa).

This sequence belongs to the gamma-glutamyl phosphate reductase family.

It localises to the cytoplasm. It carries out the reaction L-glutamate 5-semialdehyde + phosphate + NADP(+) = L-glutamyl 5-phosphate + NADPH + H(+). Its pathway is amino-acid biosynthesis; L-proline biosynthesis; L-glutamate 5-semialdehyde from L-glutamate: step 2/2. Functionally, catalyzes the NADPH-dependent reduction of L-glutamate 5-phosphate into L-glutamate 5-semialdehyde and phosphate. The product spontaneously undergoes cyclization to form 1-pyrroline-5-carboxylate. This chain is Gamma-glutamyl phosphate reductase, found in Sulfurovum sp. (strain NBC37-1).